Reading from the N-terminus, the 210-residue chain is Guanylate kinase (210 aa).

The region spanning 6-184 (GTLYIISAPS…ALQDLKCIIQ (179 aa)) is the Guanylate kinase-like domain. 13-20 (APSGAGKT) lines the ATP pocket.

It belongs to the guanylate kinase family.

It is found in the cytoplasm. The enzyme catalyses GMP + ATP = GDP + ADP. Its function is as follows. Essential for recycling GMP and indirectly, cGMP. This chain is Guanylate kinase, found in Nitrosospira multiformis (strain ATCC 25196 / NCIMB 11849 / C 71).